The sequence spans 303 residues: Pseudouridine-5'-phosphate glycosidase (303 aa).

Catalysis depends on Glu-26, which acts as the Proton donor. Residues Lys-87 and Val-107 each coordinate substrate. Residue Asp-139 coordinates Mn(2+). 141–143 (SAD) contributes to the substrate binding site. The active-site Nucleophile is the Lys-160.

The protein belongs to the pseudouridine-5'-phosphate glycosidase family. In terms of assembly, homotrimer. Mn(2+) is required as a cofactor.

The enzyme catalyses D-ribose 5-phosphate + uracil = psi-UMP + H2O. Functionally, catalyzes the reversible cleavage of pseudouridine 5'-phosphate (PsiMP) to ribose 5-phosphate and uracil. Functions biologically in the cleavage direction, as part of a pseudouridine degradation pathway. The chain is Pseudouridine-5'-phosphate glycosidase from Saccharopolyspora erythraea (strain ATCC 11635 / DSM 40517 / JCM 4748 / NBRC 13426 / NCIMB 8594 / NRRL 2338).